The chain runs to 289 residues: MPQHDQLHRYLFENFAVRGELVTVSETLQQILENHDYPQPVKNVLAELLVATSLLTATLKFDGDITVQLQGDGPMNLAVINGNNNQQMRGVARVQGEIPENADLKTLVGNGYVVITITPSEGERYQGVVGLEGDTLAACLEDYFMRSEQLPTRLFIRTGDVDGKPAAGGMLLQVMPAQNTQQDDFDHLATLTETIKTEELLTLPANEVLWRLYHEEEVTVYDPQDVEFKCTCSRERCADALKTLPDEEVDSILAEDGEIDMHCDYCGNHYLFNAMDIAEIRNNASPADP.

2 disulfide bridges follow: cysteine 230–cysteine 232 and cysteine 263–cysteine 266.

The protein belongs to the HSP33 family. In terms of processing, under oxidizing conditions two disulfide bonds are formed involving the reactive cysteines. Under reducing conditions zinc is bound to the reactive cysteines and the protein is inactive.

It is found in the cytoplasm. Its function is as follows. Redox regulated molecular chaperone. Protects both thermally unfolding and oxidatively damaged proteins from irreversible aggregation. Plays an important role in the bacterial defense system toward oxidative stress. The polypeptide is 33 kDa chaperonin (Shigella flexneri serotype 5b (strain 8401)).